Here is a 204-residue protein sequence, read N- to C-terminus: Large ribosomal subunit protein bL25 (204 aa).

It belongs to the bacterial ribosomal protein bL25 family. CTC subfamily. Part of the 50S ribosomal subunit; part of the 5S rRNA/L5/L18/L25 subcomplex. Contacts the 5S rRNA. Binds to the 5S rRNA independently of L5 and L18.

In terms of biological role, this is one of the proteins that binds to the 5S RNA in the ribosome where it forms part of the central protuberance. The protein is Large ribosomal subunit protein bL25 of Burkholderia mallei (strain NCTC 10247).